The following is a 38-amino-acid chain: RSAQGMGKMERLLASYRGALEPSTPLGDLSGSLGHPVE.

Residues 18-38 form a disordered region; sequence GALEPSTPLGDLSGSLGHPVE.

As to expression, produced by the medulla terminalis X-organ in the eyestalks and transported to the sinus gland where it is stored and released.

The protein resides in the secreted. This is CHH precursor-related peptide from Cancer pagurus (Rock crab).